The primary structure comprises 474 residues: tRNA-2-methylthio-N(6)-dimethylallyladenosine synthase (474 aa).

The MTTase N-terminal domain occupies lysine 3–threonine 120. The [4Fe-4S] cluster site is built by cysteine 12, cysteine 49, cysteine 83, cysteine 157, cysteine 161, and cysteine 164. Residues arginine 143–arginine 375 form the Radical SAM core domain. The TRAM domain maps to arginine 378–arginine 441.

Belongs to the methylthiotransferase family. MiaB subfamily. As to quaternary structure, monomer. [4Fe-4S] cluster is required as a cofactor.

The protein localises to the cytoplasm. It catalyses the reaction N(6)-dimethylallyladenosine(37) in tRNA + (sulfur carrier)-SH + AH2 + 2 S-adenosyl-L-methionine = 2-methylsulfanyl-N(6)-dimethylallyladenosine(37) in tRNA + (sulfur carrier)-H + 5'-deoxyadenosine + L-methionine + A + S-adenosyl-L-homocysteine + 2 H(+). Catalyzes the methylthiolation of N6-(dimethylallyl)adenosine (i(6)A), leading to the formation of 2-methylthio-N6-(dimethylallyl)adenosine (ms(2)i(6)A) at position 37 in tRNAs that read codons beginning with uridine. The chain is tRNA-2-methylthio-N(6)-dimethylallyladenosine synthase from Vibrio parahaemolyticus serotype O3:K6 (strain RIMD 2210633).